Here is an 803-residue protein sequence, read N- to C-terminus: Nuclear factor of activated T-cells, cytoplasmic 1 (803 aa).

Residues 101–106 (PRIEIT) form a calcineurin-binding region. Residues 109–199 (LGLHHNSSQF…CVSPKTTDPE (91 aa)) form a transactivation domain A (TAD-A) region. The segment covering 181 to 195 (PQTSPWQSPCVSPKT) has biased composition (polar residues). The disordered stretch occupies residues 181 to 279 (PQTSPWQSPC…GSPRVSVTDD (99 aa)). Repeat copies occupy residues 184–200 (SPWQ…DPEE) and 214–230 (SPRH…VTEE). The 3 X SP repeats stretch occupies residues 184-279 (SPWQSPCVSP…GSPRVSVTDD (96 aa)). Phosphoserine is present on residues Ser-214 and Ser-218. Residues 214–231 (SPRHSPSTSPRTSVTEES) show a composition bias toward low complexity. Ser-226 is subject to Phosphoserine; by PKA. Positions 246-248 (KRK) match the Nuclear localization signal motif. Repeat unit 3 spans residues 263–279 (SPTPSPQGSPRVSVTDD). At Ser-275 the chain carries Phosphoserine; by PKA. Positions 291 to 302 (SAIVAAINALST) match the Nuclear export signal motif. The RHD domain maps to 389–571 (PSLPALDWQL…NPIECSQRSA (183 aa)). The DNA-binding element occupies 418–425 (RAHYETEG). The Nuclear localization signal motif lies at 661 to 663 (KRK). Residues 723-803 (LMPGFPPRPQ…QPQVSPTSSG (81 aa)) form a disordered region. The span at 778–792 (SGVPPGPPQPPPPTL) shows a compositional bias: pro residues. Positions 793-803 (LQPQVSPTSSG) are enriched in low complexity.

As to quaternary structure, member of the multicomponent NFATC transcription complex that consists of at least two components, a pre-existing cytoplasmic component NFATC2 and an inducible nuclear component NFATC1. Other members such as NFATC4, NFATC3 or members of the activating protein-1 family, MAF, GATA4 and Cbp/p300 can also bind the complex. NFATC proteins bind to DNA as monomers. Interacts with HOMER2 and HOMER3; this interaction may compete with calcineurin/PPP3CA-binding and hence prevent NFATC1 dephosphorylation and activation. Interacts with TLE6/GRG6. Post-translationally, phosphorylated by NFATC-kinase and GSK3B; phosphorylation induces NFATC1 nuclear exit and dephosphorylation by calcineurin promotes nuclear import. Phosphorylation by PKA and DYRK2 negatively modulates nuclear accumulation, and promotes subsequent phosphorylation by GSK3B or casein kinase 1.

It is found in the cytoplasm. The protein localises to the nucleus. Functionally, plays a role in the inducible expression of cytokine genes in T-cells, especially in the induction of the IL-2 or IL-4 gene transcription. Also controls gene expression in embryonic cardiac cells. Could regulate not only the activation and proliferation but also the differentiation and programmed death of T-lymphocytes as well as lymphoid and non-lymphoid cells. Required for osteoclastogenesis and regulates many genes important for osteoclast differentiation and function. This chain is Nuclear factor of activated T-cells, cytoplasmic 1, found in Bos taurus (Bovine).